A 271-amino-acid chain; its full sequence is Undecaprenyl-diphosphatase 2 (271 aa).

A run of 8 helical transmembrane segments spans residues 1-21 (MNFFQAIILAIAQGVSELFPI), 46-66 (NFLEFVVMMHIGTTISLIVYF), 88-108 (ALIVIGTIPAIILGAIFEQTI), 111-131 (AFSDVIVASIFLIFNGLLLFF), 146-166 (LKGWQALVIGCFQSLALIPGF), 190-210 (SMLLSTPMVAGAATLEIPKLI), 220-240 (LSLIGGIVAGLAAFLSIYILM), and 251-271 (MLPFAIYCIVIGIGVLASKAI).

This sequence belongs to the UppP family.

Its subcellular location is the cell membrane. It catalyses the reaction di-trans,octa-cis-undecaprenyl diphosphate + H2O = di-trans,octa-cis-undecaprenyl phosphate + phosphate + H(+). In terms of biological role, catalyzes the dephosphorylation of undecaprenyl diphosphate (UPP). Confers resistance to bacitracin. This chain is Undecaprenyl-diphosphatase 2, found in Oenococcus oeni (strain ATCC BAA-331 / PSU-1).